Reading from the N-terminus, the 280-residue chain is 4-hydroxy-3-methylbut-2-enyl diphosphate reductase (280 aa).

Cys12 serves as a coordination point for [4Fe-4S] cluster. His40 and His72 together coordinate (2E)-4-hydroxy-3-methylbut-2-enyl diphosphate. Dimethylallyl diphosphate is bound by residues His40 and His72. Isopentenyl diphosphate contacts are provided by His40 and His72. Cys94 provides a ligand contact to [4Fe-4S] cluster. His122 serves as a coordination point for (2E)-4-hydroxy-3-methylbut-2-enyl diphosphate. Residue His122 participates in dimethylallyl diphosphate binding. His122 is an isopentenyl diphosphate binding site. Glu124 (proton donor) is an active-site residue. Thr160 contributes to the (2E)-4-hydroxy-3-methylbut-2-enyl diphosphate binding site. Residue Cys188 coordinates [4Fe-4S] cluster. Ser216, Asn218, and Ser260 together coordinate (2E)-4-hydroxy-3-methylbut-2-enyl diphosphate. Positions 216, 218, and 260 each coordinate dimethylallyl diphosphate. Positions 216, 218, and 260 each coordinate isopentenyl diphosphate.

It belongs to the IspH family. Requires [4Fe-4S] cluster as cofactor.

The enzyme catalyses isopentenyl diphosphate + 2 oxidized [2Fe-2S]-[ferredoxin] + H2O = (2E)-4-hydroxy-3-methylbut-2-enyl diphosphate + 2 reduced [2Fe-2S]-[ferredoxin] + 2 H(+). The catalysed reaction is dimethylallyl diphosphate + 2 oxidized [2Fe-2S]-[ferredoxin] + H2O = (2E)-4-hydroxy-3-methylbut-2-enyl diphosphate + 2 reduced [2Fe-2S]-[ferredoxin] + 2 H(+). It functions in the pathway isoprenoid biosynthesis; dimethylallyl diphosphate biosynthesis; dimethylallyl diphosphate from (2E)-4-hydroxy-3-methylbutenyl diphosphate: step 1/1. It participates in isoprenoid biosynthesis; isopentenyl diphosphate biosynthesis via DXP pathway; isopentenyl diphosphate from 1-deoxy-D-xylulose 5-phosphate: step 6/6. In terms of biological role, catalyzes the conversion of 1-hydroxy-2-methyl-2-(E)-butenyl 4-diphosphate (HMBPP) into a mixture of isopentenyl diphosphate (IPP) and dimethylallyl diphosphate (DMAPP). Acts in the terminal step of the DOXP/MEP pathway for isoprenoid precursor biosynthesis. This Trichlorobacter lovleyi (strain ATCC BAA-1151 / DSM 17278 / SZ) (Geobacter lovleyi) protein is 4-hydroxy-3-methylbut-2-enyl diphosphate reductase.